A 21-amino-acid polypeptide reads, in one-letter code: Venom peptide Ocy4 (21 aa).

In terms of tissue distribution, expressed by the venom gland.

It localises to the secreted. This chain is Venom peptide Ocy4, found in Opisthacanthus cayaporum (South American scorpion).